The sequence spans 331 residues: Anthranilate phosphoribosyltransferase (331 aa).

5-phospho-alpha-D-ribose 1-diphosphate-binding positions include glycine 79, 82 to 83 (GD), serine 87, 89 to 92 (NIST), 107 to 115 (KHCNGNISS), and serine 119. Residue glycine 79 participates in anthranilate binding. Serine 91 is a binding site for Mg(2+). Asparagine 110 contacts anthranilate. Arginine 165 serves as a coordination point for anthranilate. 2 residues coordinate Mg(2+): aspartate 223 and glutamate 224.

This sequence belongs to the anthranilate phosphoribosyltransferase family. As to quaternary structure, homodimer. It depends on Mg(2+) as a cofactor.

The catalysed reaction is N-(5-phospho-beta-D-ribosyl)anthranilate + diphosphate = 5-phospho-alpha-D-ribose 1-diphosphate + anthranilate. Its pathway is amino-acid biosynthesis; L-tryptophan biosynthesis; L-tryptophan from chorismate: step 2/5. Catalyzes the transfer of the phosphoribosyl group of 5-phosphorylribose-1-pyrophosphate (PRPP) to anthranilate to yield N-(5'-phosphoribosyl)-anthranilate (PRA). This chain is Anthranilate phosphoribosyltransferase, found in Buchnera aphidicola subsp. Baizongia pistaciae (strain Bp).